An 831-amino-acid chain; its full sequence is Maltodextrin phosphorylase (831 aa).

Position 592 is an N6-(pyridoxal phosphate)lysine (lysine 592).

Belongs to the glycogen phosphorylase family. Trimer (at 25 degrees Celsius). It depends on pyridoxal 5'-phosphate as a cofactor.

The catalysed reaction is [(1-&gt;4)-alpha-D-glucosyl](n) + phosphate = [(1-&gt;4)-alpha-D-glucosyl](n-1) + alpha-D-glucose 1-phosphate. Functionally, phosphorylase is an important allosteric enzyme in carbohydrate metabolism. Catalyzes the phospholytic cleavage of maltodextrins with a minimal chain length of five glucose residues to yield glucose-1-phosphate. Low activity with tetraose and no activity with triose and maltose. Long maltodextrins (8 to 15 glucose units), amylose and starch are not as good substrates as maltoheptaose. The chain is Maltodextrin phosphorylase (malP) from Thermococcus litoralis (strain ATCC 51850 / DSM 5473 / JCM 8560 / NS-C).